Reading from the N-terminus, the 263-residue chain is Hydroxyethylthiazole kinase (263 aa).

Substrate is bound at residue Met39. The ATP site is built by Lys115 and Thr160. Residue Gly187 participates in substrate binding.

It belongs to the Thz kinase family. The cofactor is Mg(2+).

The enzyme catalyses 5-(2-hydroxyethyl)-4-methylthiazole + ATP = 4-methyl-5-(2-phosphooxyethyl)-thiazole + ADP + H(+). The protein operates within cofactor biosynthesis; thiamine diphosphate biosynthesis; 4-methyl-5-(2-phosphoethyl)-thiazole from 5-(2-hydroxyethyl)-4-methylthiazole: step 1/1. In terms of biological role, catalyzes the phosphorylation of the hydroxyl group of 4-methyl-5-beta-hydroxyethylthiazole (THZ). The sequence is that of Hydroxyethylthiazole kinase from Staphylococcus aureus (strain JH9).